The primary structure comprises 359 residues: Peptide chain release factor 1 (359 aa).

Gln238 is modified (N5-methylglutamine).

Belongs to the prokaryotic/mitochondrial release factor family. Methylated by PrmC. Methylation increases the termination efficiency of RF1.

The protein resides in the cytoplasm. Peptide chain release factor 1 directs the termination of translation in response to the peptide chain termination codons UAG and UAA. In Rhodococcus jostii (strain RHA1), this protein is Peptide chain release factor 1.